The following is a 535-amino-acid chain: Light-independent protochlorophyllide reductase subunit B (535 aa).

[4Fe-4S] cluster is bound at residue Asp36. Catalysis depends on Asp292, which acts as the Proton donor. A substrate-binding site is contributed by 428 to 429 (GL). The segment at 447–483 (SDDAAKAEPDQPVSNAHGHTESKTVSQGEPIASDEGG) is disordered.

It belongs to the ChlB/BchB/BchZ family. In terms of assembly, protochlorophyllide reductase is composed of three subunits; BchL, BchN and BchB. Forms a heterotetramer of two BchB and two BchN subunits. Requires [4Fe-4S] cluster as cofactor.

It catalyses the reaction chlorophyllide a + oxidized 2[4Fe-4S]-[ferredoxin] + 2 ADP + 2 phosphate = protochlorophyllide a + reduced 2[4Fe-4S]-[ferredoxin] + 2 ATP + 2 H2O. It functions in the pathway porphyrin-containing compound metabolism; bacteriochlorophyll biosynthesis (light-independent). Component of the dark-operative protochlorophyllide reductase (DPOR) that uses Mg-ATP and reduced ferredoxin to reduce ring D of protochlorophyllide (Pchlide) to form chlorophyllide a (Chlide). This reaction is light-independent. The NB-protein (BchN-BchB) is the catalytic component of the complex. The protein is Light-independent protochlorophyllide reductase subunit B of Chlorobium phaeobacteroides (strain DSM 266 / SMG 266 / 2430).